Reading from the N-terminus, the 400-residue chain is Bifunctional enzyme IspD/IspF (400 aa).

A 2-C-methyl-D-erythritol 4-phosphate cytidylyltransferase region spans residues 1-240 (MQESTMKFGI…EKLSHALPDV (240 aa)). A 2-C-methyl-D-erythritol 2,4-cyclodiphosphate synthase region spans residues 241–400 (RTGNGYDVHQ…ATVVYQGRPL (160 aa)). A divalent metal cation contacts are provided by Asp247 and His249. Residues 247–249 (DVH) and 273–274 (HS) each bind 4-CDP-2-C-methyl-D-erythritol 2-phosphate. His281 lines the a divalent metal cation pocket. 4-CDP-2-C-methyl-D-erythritol 2-phosphate contacts are provided by residues 295–297 (DIG), 371–374 (TTNE), Phe378, and Arg381.

This sequence in the N-terminal section; belongs to the IspD/TarI cytidylyltransferase family. IspD subfamily. The protein in the C-terminal section; belongs to the IspF family. It depends on a divalent metal cation as a cofactor.

The catalysed reaction is 2-C-methyl-D-erythritol 4-phosphate + CTP + H(+) = 4-CDP-2-C-methyl-D-erythritol + diphosphate. It carries out the reaction 4-CDP-2-C-methyl-D-erythritol 2-phosphate = 2-C-methyl-D-erythritol 2,4-cyclic diphosphate + CMP. The protein operates within isoprenoid biosynthesis; isopentenyl diphosphate biosynthesis via DXP pathway; isopentenyl diphosphate from 1-deoxy-D-xylulose 5-phosphate: step 2/6. It participates in isoprenoid biosynthesis; isopentenyl diphosphate biosynthesis via DXP pathway; isopentenyl diphosphate from 1-deoxy-D-xylulose 5-phosphate: step 4/6. Bifunctional enzyme that catalyzes the formation of 4-diphosphocytidyl-2-C-methyl-D-erythritol from CTP and 2-C-methyl-D-erythritol 4-phosphate (MEP) (IspD), and catalyzes the conversion of 4-diphosphocytidyl-2-C-methyl-D-erythritol 2-phosphate (CDP-ME2P) to 2-C-methyl-D-erythritol 2,4-cyclodiphosphate (ME-CPP) with a corresponding release of cytidine 5-monophosphate (CMP) (IspF). The sequence is that of Bifunctional enzyme IspD/IspF from Agrobacterium fabrum (strain C58 / ATCC 33970) (Agrobacterium tumefaciens (strain C58)).